The sequence spans 445 residues: Chromosome partition protein MukF (445 aa).

Positions 213–241 (LSETSATLRELQDTLQAAGDELQTQILDI) are leucine-zipper.

Belongs to the MukF family. As to quaternary structure, interacts, and probably forms a ternary complex, with MukE and MukB via its C-terminal region. The complex formation is stimulated by calcium or magnesium. It is required for an interaction between MukE and MukB.

The protein localises to the cytoplasm. It localises to the nucleoid. Functionally, involved in chromosome condensation, segregation and cell cycle progression. May participate in facilitating chromosome segregation by condensation DNA from both sides of a centrally located replisome during cell division. Not required for mini-F plasmid partitioning. Probably acts via its interaction with MukB and MukE. Overexpression results in anucleate cells. It has a calcium binding activity. The polypeptide is Chromosome partition protein MukF (Vibrio cholerae serotype O1 (strain ATCC 39541 / Classical Ogawa 395 / O395)).